The sequence spans 158 residues: Non-secretory ribonuclease (158 aa).

Positions methionine 1–alanine 27 are cleaved as a signal peptide. Catalysis depends on histidine 42, which acts as the Proton acceptor. Cystine bridges form between cysteine 50–cysteine 110, cysteine 64–cysteine 121, cysteine 82–cysteine 136, and cysteine 89–cysteine 98. Residue tyrosine 60 is modified to 3'-nitrotyrosine. Lysine 65–threonine 69 contacts substrate. N-linked (GlcNAc...) asparagine glycans are attached at residues asparagine 86, asparagine 92, and asparagine 111. Histidine 153 acts as the Proton donor in catalysis.

It belongs to the pancreatic ribonuclease family. In terms of assembly, interacts with and forms a tight 1:1 complex with RNH1. Dimerization of two such complexes may occur.

Its subcellular location is the lysosome. The protein localises to the cytoplasmic granule. It carries out the reaction an [RNA] containing cytidine + H2O = an [RNA]-3'-cytidine-3'-phosphate + a 5'-hydroxy-ribonucleotide-3'-[RNA].. The catalysed reaction is an [RNA] containing uridine + H2O = an [RNA]-3'-uridine-3'-phosphate + a 5'-hydroxy-ribonucleotide-3'-[RNA].. This is a non-secretory ribonuclease. It is a pyrimidine specific nuclease with a slight preference for U. Cytotoxin and helminthotoxin. Possesses a wide variety of biological activities. The polypeptide is Non-secretory ribonuclease (RNASE2) (Aotus trivirgatus (Three-striped night monkey)).